Consider the following 444-residue polypeptide: Exodeoxyribonuclease 7 large subunit (444 aa).

This sequence belongs to the XseA family. As to quaternary structure, heterooligomer composed of large and small subunits.

The protein localises to the cytoplasm. The enzyme catalyses Exonucleolytic cleavage in either 5'- to 3'- or 3'- to 5'-direction to yield nucleoside 5'-phosphates.. In terms of biological role, bidirectionally degrades single-stranded DNA into large acid-insoluble oligonucleotides, which are then degraded further into small acid-soluble oligonucleotides. In Hahella chejuensis (strain KCTC 2396), this protein is Exodeoxyribonuclease 7 large subunit.